Reading from the N-terminus, the 1391-residue chain is DNA-directed RNA polymerase subunit beta (1391 aa).

Belongs to the RNA polymerase beta chain family. As to quaternary structure, the RNAP catalytic core consists of 2 alpha, 1 beta, 1 beta' and 1 omega subunit. When a sigma factor is associated with the core the holoenzyme is formed, which can initiate transcription.

It carries out the reaction RNA(n) + a ribonucleoside 5'-triphosphate = RNA(n+1) + diphosphate. Its function is as follows. DNA-dependent RNA polymerase catalyzes the transcription of DNA into RNA using the four ribonucleoside triphosphates as substrates. The chain is DNA-directed RNA polymerase subunit beta from Paramagnetospirillum magneticum (strain ATCC 700264 / AMB-1) (Magnetospirillum magneticum).